The primary structure comprises 299 residues: MKPNVQQVKTFLMQLQDDICQKLSAVDGGEFHEDSWQREAGGGGRSRVLRNGGVFEQAGVNFSHVHGDAMPASATAHRPELAGRSFEAMGVSLVVHPQSPFVPTSHANVRFFIAEKPGADPVWWFGGGFDLTPYYGFEEDAVHWHRTARDICQPFGEEVYPKYKKWCDDYFYLKHRDEQRGIGGLFFDDLNAPDFDTAFNFMQAVGQGYTDAYLPIVERRRNTDYGVREREFQLYRRGRYVEFNLVWDRGTLFGLQTGGRTESILMSMPPLVRWEYSFEPKEGSPEAALAEFIKVRDWI.

Residue Ser-92 participates in substrate binding. Positions 96 and 106 each coordinate a divalent metal cation. Catalysis depends on His-106, which acts as the Proton donor. Position 108 to 110 (108 to 110 (NVR)) interacts with substrate. His-145 and His-175 together coordinate a divalent metal cation. Residues 240–275 (YVEFNLVWDRGTLFGLQTGGRTESILMSMPPLVRWE) are important for dimerization. 258 to 260 (GGR) is a binding site for substrate.

This sequence belongs to the aerobic coproporphyrinogen-III oxidase family. Homodimer. The cofactor is a divalent metal cation.

It is found in the cytoplasm. The catalysed reaction is coproporphyrinogen III + O2 + 2 H(+) = protoporphyrinogen IX + 2 CO2 + 2 H2O. It functions in the pathway porphyrin-containing compound metabolism; protoporphyrin-IX biosynthesis; protoporphyrinogen-IX from coproporphyrinogen-III (O2 route): step 1/1. In terms of biological role, involved in the heme biosynthesis. Catalyzes the aerobic oxidative decarboxylation of propionate groups of rings A and B of coproporphyrinogen-III to yield the vinyl groups in protoporphyrinogen-IX. In Enterobacter sp. (strain 638), this protein is Oxygen-dependent coproporphyrinogen-III oxidase.